We begin with the raw amino-acid sequence, 416 residues long: Gamma-glutamyl phosphate reductase (416 aa).

The protein belongs to the gamma-glutamyl phosphate reductase family.

It localises to the cytoplasm. It carries out the reaction L-glutamate 5-semialdehyde + phosphate + NADP(+) = L-glutamyl 5-phosphate + NADPH + H(+). It participates in amino-acid biosynthesis; L-proline biosynthesis; L-glutamate 5-semialdehyde from L-glutamate: step 2/2. Functionally, catalyzes the NADPH-dependent reduction of L-glutamate 5-phosphate into L-glutamate 5-semialdehyde and phosphate. The product spontaneously undergoes cyclization to form 1-pyrroline-5-carboxylate. In Vibrio vulnificus (strain CMCP6), this protein is Gamma-glutamyl phosphate reductase.